A 244-amino-acid chain; its full sequence is Phosphoadenosine 5'-phosphosulfate reductase (244 aa).

Cys239 serves as the catalytic Nucleophile; cysteine thiosulfonate intermediate.

This sequence belongs to the PAPS reductase family. CysH subfamily.

It is found in the cytoplasm. The enzyme catalyses [thioredoxin]-disulfide + sulfite + adenosine 3',5'-bisphosphate + 2 H(+) = [thioredoxin]-dithiol + 3'-phosphoadenylyl sulfate. It functions in the pathway sulfur metabolism; hydrogen sulfide biosynthesis; sulfite from sulfate: step 3/3. Its function is as follows. Catalyzes the formation of sulfite from phosphoadenosine 5'-phosphosulfate (PAPS) using thioredoxin as an electron donor. The polypeptide is Phosphoadenosine 5'-phosphosulfate reductase (Yersinia pseudotuberculosis serotype O:1b (strain IP 31758)).